Consider the following 294-residue polypeptide: Putative inactive magnesium transporter MRS2-8 (294 aa).

Positions 179-216 form a coiled coil; the sequence is KLKSSMTRLTAQVQKIKDELEQLLEDDEDMAELYLSRK.

The protein belongs to the CorA metal ion transporter (MIT) (TC 1.A.35.5) family.

The chain is Putative inactive magnesium transporter MRS2-8 (MRS2-8) from Arabidopsis thaliana (Mouse-ear cress).